Reading from the N-terminus, the 505-residue chain is Histidine ammonia-lyase (505 aa).

Residues 141 to 143 constitute a cross-link (5-imidazolinone (Ala-Gly)); it reads ASG. Residue serine 142 is modified to 2,3-didehydroalanine (Ser).

This sequence belongs to the PAL/histidase family. In terms of processing, contains an active site 4-methylidene-imidazol-5-one (MIO), which is formed autocatalytically by cyclization and dehydration of residues Ala-Ser-Gly.

It is found in the cytoplasm. The enzyme catalyses L-histidine = trans-urocanate + NH4(+). It participates in amino-acid degradation; L-histidine degradation into L-glutamate; N-formimidoyl-L-glutamate from L-histidine: step 1/3. The sequence is that of Histidine ammonia-lyase from Bacillus thuringiensis (strain Al Hakam).